We begin with the raw amino-acid sequence, 388 residues long: Putative O-antigen polymerase (388 aa).

The next 9 membrane-spanning stretches (helical) occupy residues 23–43 (IFYP…GYEI), 57–77 (LIFL…TESV), 97–117 (VHNV…MRLS), 143–163 (NFSA…IWSK), 180–200 (IVFI…MVII), 215–235 (VYLI…LRGL), 312–332 (ISAE…GVLW), 338–358 (YISV…IFYH), and 361–381 (FMTN…FSQF).

Its subcellular location is the cell inner membrane. Functionally, may function in vitro as a polymerase that catalyzes the polymerization of the O-antigen repeat units on the periplasmic face of the inner membrane, leading to the formation of the lipid-linked O-antigen molecule. However, E.coli K12 strains do not normally produce the O-antigen in vivo due to mutations in the rfb gene cluster. K12 strains are phenotypically rough, their lipopolysaccharide having a complete core structure, but no O-antigen. The protein is Putative O-antigen polymerase of Escherichia coli (strain K12).